Reading from the N-terminus, the 63-residue chain is Laccase-C1 (63 aa).

Belongs to the multicopper oxidase family. In terms of assembly, monomer. It depends on Cu cation as a cofactor. In terms of processing, glycosylated; contains 16% carbohydrates.

It localises to the secreted. It carries out the reaction 4 hydroquinone + O2 = 4 benzosemiquinone + 2 H2O. With respect to regulation, inhibited by sodium azide. Lignin degradation and detoxification of lignin-derived products. Oxidation of a broad range of substrates including mono-, di- and polyphenols, aromatic amines and methoxy-substituted phenols accompanied by reduction of oxygen to water. This is Laccase-C1 from Cerrena unicolor (Canker rot fungus).